We begin with the raw amino-acid sequence, 101 residues long: Urease subunit beta (101 aa).

Belongs to the urease beta subunit family. In terms of assembly, heterotrimer of UreA (gamma), UreB (beta) and UreC (alpha) subunits. Three heterotrimers associate to form the active enzyme.

It is found in the cytoplasm. It catalyses the reaction urea + 2 H2O + H(+) = hydrogencarbonate + 2 NH4(+). It participates in nitrogen metabolism; urea degradation; CO(2) and NH(3) from urea (urease route): step 1/1. This chain is Urease subunit beta, found in Cereibacter sphaeroides (strain ATCC 17025 / ATH 2.4.3) (Rhodobacter sphaeroides).